A 137-amino-acid chain; its full sequence is MQATETKDRAVYWGTGRRKTSVARVRLIPGTGQVTVNGKPGDTYFNRIADYLQGIKAPLETLGLENEYDILVKAHGGGLTGQADAVKLGVARALCELAPENRQPLKSEGYLTRDPRAKERKKYGLHKARKAPQYSKR.

Residues 104–137 are disordered; that stretch reads PLKSEGYLTRDPRAKERKKYGLHKARKAPQYSKR. The span at 118 to 137 shows a compositional bias: basic residues; the sequence is KERKKYGLHKARKAPQYSKR.

Belongs to the universal ribosomal protein uS9 family.

This Gloeothece citriformis (strain PCC 7424) (Cyanothece sp. (strain PCC 7424)) protein is Small ribosomal subunit protein uS9.